The sequence spans 66 residues: Cold shock protein CspA (66 aa).

Residues 1-66 (MKQGTVKWFN…GPQAANVVKL (66 aa)) enclose the CSD domain.

Its subcellular location is the cytoplasm. Its function is as follows. Involved in cold stress response. This chain is Cold shock protein CspA (cspA), found in Staphylococcus haemolyticus (strain JCSC1435).